The sequence spans 88 residues: Small ribosomal subunit protein bS20 (88 aa).

Over residues 1–16 (MANTHSAKKATRKITR) the composition is skewed to basic residues. The interval 1 to 20 (MANTHSAKKATRKITRRTAV) is disordered.

Belongs to the bacterial ribosomal protein bS20 family.

In terms of biological role, binds directly to 16S ribosomal RNA. The sequence is that of Small ribosomal subunit protein bS20 from Nitrobacter hamburgensis (strain DSM 10229 / NCIMB 13809 / X14).